The chain runs to 292 residues: Elongation factor Ts (292 aa).

The interval 79 to 82 is involved in Mg(2+) ion dislocation from EF-Tu; sequence TDFV.

The protein belongs to the EF-Ts family.

Its subcellular location is the cytoplasm. In terms of biological role, associates with the EF-Tu.GDP complex and induces the exchange of GDP to GTP. It remains bound to the aminoacyl-tRNA.EF-Tu.GTP complex up to the GTP hydrolysis stage on the ribosome. The chain is Elongation factor Ts from Xanthomonas axonopodis pv. citri (strain 306).